Consider the following 58-residue polypeptide: Large ribosomal subunit protein uL30 (58 aa).

The protein belongs to the universal ribosomal protein uL30 family. Part of the 50S ribosomal subunit.

This chain is Large ribosomal subunit protein uL30, found in Pelobacter propionicus (strain DSM 2379 / NBRC 103807 / OttBd1).